The primary structure comprises 287 residues: 3-alpha-hydroxysteroid sulfotransferase (287 aa).

Residue 44–49 (KSGTNW) participates in 3'-phosphoadenylyl sulfate binding. Residues Trp-72 and Trp-77 each coordinate substrate. His-99 (proton acceptor) is an active-site residue. 3'-phosphoadenylyl sulfate contacts are provided by residues Arg-121, Ser-129, Tyr-184, 218 to 223 (SSFQFM), and 247 to 249 (RKG).

It belongs to the sulfotransferase 1 family. Homodimer. Adrenal gland and liver.

It is found in the cytoplasm. The enzyme catalyses an alcohol + 3'-phosphoadenylyl sulfate = an alkyl sulfate + adenosine 3',5'-bisphosphate + H(+). Sulfotransferase that utilizes 3'-phospho-5'-adenylyl sulfate (PAPS) as sulfonate donor to catalyze the sulfonation of 3-alpha-hydroxyl groups of neutral steroids. The sequence is that of 3-alpha-hydroxysteroid sulfotransferase (STD1) from Cavia porcellus (Guinea pig).